Reading from the N-terminus, the 475-residue chain is Poly(3-hydroxyalkanoate) polymerase subunit PhaC (475 aa).

Residues 82-348 (PILIVYALIN…TIEFSTGHIG (267 aa)) enclose the AB hydrolase-1 domain. Active-site charge relay system residues include cysteine 162, aspartate 317, and histidine 346. The disordered stretch occupies residues 369–431 (ERSTGSEEVD…ADVDSVSGIG (63 aa)). Residues 375–423 (EEVDIEVESPEAAEDDAVDQSELTDIDVDATDDVDADATEDDATDEPAD) show a composition bias toward acidic residues.

It belongs to the PHA/PHB synthase family. As to quaternary structure, heterodimer with PhaE.

It participates in biopolymer metabolism; poly-(R)-3-hydroxybutanoate biosynthesis. Its function is as follows. Involved in the production of polyhydroxyalkonic acids (PHAs), which are water-insoluble biopolymers used as intracellular energy reserve material when cells grow under conditions of nutrient limitation. PHAs are composed primarily of 3-hydroxybutyric acid (3HB) and 3-hydroxyvaleric acid (3HV). Required for the production of poly-beta-hydroxybutyrate (PHB) and poly(beta-hydroxybutyrate-co-beta-hydroxyvalerate) (PHBV). In Haloarcula marismortui (strain ATCC 43049 / DSM 3752 / JCM 8966 / VKM B-1809) (Halobacterium marismortui), this protein is Poly(3-hydroxyalkanoate) polymerase subunit PhaC (phaC).